The following is a 236-amino-acid chain: 2,3,4,5-tetrahydropyridine-2,6-dicarboxylate N-acetyltransferase (236 aa).

Belongs to the transferase hexapeptide repeat family. DapH subfamily.

The catalysed reaction is (S)-2,3,4,5-tetrahydrodipicolinate + acetyl-CoA + H2O = L-2-acetamido-6-oxoheptanedioate + CoA. The protein operates within amino-acid biosynthesis; L-lysine biosynthesis via DAP pathway; LL-2,6-diaminopimelate from (S)-tetrahydrodipicolinate (acetylase route): step 1/3. In terms of biological role, catalyzes the transfer of an acetyl group from acetyl-CoA to tetrahydrodipicolinate. The protein is 2,3,4,5-tetrahydropyridine-2,6-dicarboxylate N-acetyltransferase of Listeria innocua serovar 6a (strain ATCC BAA-680 / CLIP 11262).